We begin with the raw amino-acid sequence, 115 residues long: Potassium-transporting ATPase potassium-binding subunit (115 aa).

2 consecutive transmembrane segments (helical) span residues tyrosine 8–phenylalanine 28 and serine 60–leucine 80.

This sequence belongs to the KdpA family. In terms of assembly, the system is composed of three essential subunits: KdpA, KdpB and KdpC.

It is found in the cell membrane. Functionally, part of the high-affinity ATP-driven potassium transport (or Kdp) system, which catalyzes the hydrolysis of ATP coupled with the electrogenic transport of potassium into the cytoplasm. This subunit binds the extracellular potassium ions and delivers the ions to the membrane domain of KdpB through an intramembrane tunnel. The chain is Potassium-transporting ATPase potassium-binding subunit from Geobacillus stearothermophilus (Bacillus stearothermophilus).